The chain runs to 204 residues: Somatotropin (204 aa).

The signal sequence occupies residues 1 to 17 (MDRVLLLLSVLTLGVSS). Gln18 is modified (pyrrolidone carboxylic acid). His36 is a Zn(2+) binding site. The cysteines at positions 69 and 177 are disulfide-linked. Glu186 serves as a coordination point for Zn(2+). Cys194 and Cys202 are oxidised to a cystine.

Belongs to the somatotropin/prolactin family.

It is found in the secreted. In terms of biological role, growth hormone plays an important role in growth control and is involved in the regulation of several anabolic processes. Implicated as an osmoregulatory substance important for seawater adaptation. The polypeptide is Somatotropin (gh) (Larimichthys crocea (Large yellow croaker)).